The primary structure comprises 479 residues: EKNVGQITQIIGPVLDVAFSPGKMPNIYNSLLIKGQNPAGQEINVTCEVQQLLGNNEVRAVAMSATDGLMRGMNVVDTGAPLSVPVGEITLGXIFNVLGDPVDNLGPVDTSTTFPIHRSAPAFTQLDTKLSIFETGIKVVDLLAPYRRGGKIGLFGGAGVGKTVLIMELINNIAKAHGGVSVFGGVGERTREGNDLYMEMKESKVINEQNISESKVALVYGQMNEPPGARMRVGLTALTMAEYFRDVNKQDVLLFIDNIFRFVQAGSEVSALLGRMPSAVGYQPTLGTEMGTLQERITSTKEGSITSIQAVYVPADDLTDPAPATTFAHLDATTVLSRGLAAKGIYPAVDPLDSTSTMLQPWIVGEEHYETAQGVKQTLQRYKELQDIIAILGLDELSEEDRLTVARARKIERFLSQPFFVAEVFTGSPGKYVSLIETIKGFQMILSGELDNLPEQAFYLVGNIDEATTKAVSLQVEGQ.

156 to 163 (GGAGVGKT) is an ATP binding site.

It belongs to the ATPase alpha/beta chains family. In terms of assembly, F-type ATPases have 2 components, CF(1) - the catalytic core - and CF(0) - the membrane proton channel. CF(1) has five subunits: alpha(3), beta(3), gamma(1), delta(1), epsilon(1). CF(0) has four main subunits: a(1), b(1), b'(1) and c(9-12).

It localises to the plastid. It is found in the chloroplast thylakoid membrane. It carries out the reaction ATP + H2O + 4 H(+)(in) = ADP + phosphate + 5 H(+)(out). In terms of biological role, produces ATP from ADP in the presence of a proton gradient across the membrane. The catalytic sites are hosted primarily by the beta subunits. The polypeptide is ATP synthase subunit beta, chloroplastic (Trichomanes davallioides (Kilau fern)).